Here is a 317-residue protein sequence, read N- to C-terminus: Melanocyte-stimulating hormone receptor (317 aa).

At 1 to 37 the chain is on the extracellular side; sequence MPVQGSQRRLLGSLNSTPTATPHLGLAANQTGARCLE. A glycan (N-linked (GlcNAc...) asparagine) is linked at Asn29. Residues 38-63 traverse the membrane as a helical segment; sequence VSIPDGLFLSLGLVSLVENVLVVTAI. Residues 64 to 72 lie on the Cytoplasmic side of the membrane; it reads AKNRNLHSP. Residues 73–93 form a helical membrane-spanning segment; it reads MYCFICCLALSDLLVSGSNML. At 94-118 the chain is on the extracellular side; sequence ETAVILLLEAGALAARAAVVQQLDN. Residues 119 to 140 traverse the membrane as a helical segment; it reads VIDVITCSSMLSSLCFLGAIAV. Topologically, residues 141 to 163 are cytoplasmic; the sequence is DRYISIFYALRYHSIVTLPRARR. A helical transmembrane segment spans residues 164–183; it reads AVAAIWVASVLFSMLFIAYY. At 184 to 191 the chain is on the extracellular side; the sequence is DHAAVLLC. The helical transmembrane segment at 192–211 threads the bilayer; that stretch reads LVVFFLAMLVLMAVLYVHML. Residues 212–240 lie on the Cytoplasmic side of the membrane; sequence ARACQHAQGIARLHKRQRPAHQSFGLKGA. A helical transmembrane segment spans residues 241–266; it reads ATLTILLGIFFLCWGPFFLHLTLIVL. The Extracellular portion of the chain corresponds to 267-279; that stretch reads CPQHPTCSCIFKN. A helical membrane pass occupies residues 280-300; that stretch reads FNLFLTLIICNAIIDPLIYAF. The Cytoplasmic segment spans residues 301-317; it reads RSQELRRTLKEVLLCSW. Cys315 carries the S-palmitoyl cysteine lipid modification.

Belongs to the G-protein coupled receptor 1 family. Interacts with MGRN1, but does not undergo MGRN1-mediated ubiquitination; this interaction competes with GNAS-binding and thus inhibits agonist-induced cAMP production. Interacts with OPN3; the interaction results in a decrease in MC1R-mediated cAMP signaling and ultimately a decrease in melanin production in melanocytes.

The protein localises to the cell membrane. Its function is as follows. Receptor for MSH (alpha, beta and gamma) and ACTH. The activity of this receptor is mediated by G proteins which activate adenylate cyclase. Mediates melanogenesis, the production of eumelanin (black/brown) and phaeomelanin (red/yellow), via regulation of cAMP signaling in melanocytes. The polypeptide is Melanocyte-stimulating hormone receptor (MC1R) (Erythrocebus patas (Red guenon)).